Consider the following 591-residue polypeptide: Lysyl oxidase homolog 1 (591 aa).

The first 22 residues, 1-22, serve as a signal peptide directing secretion; sequence MALALTGWQLVWGACVCVLVHG. A propeptide spanning residues 23–91 is cleaved from the precursor; the sequence is QQAPPGQGSD…PRRRGGLRRR (69 aa). Disordered regions lie at residues 77–107 and 233–373; these read APQAPPRRRGGLRRRQAPSLPLPGRVGSDTV and EYGG…RLSV. Basic residues predominate over residues 82-92; that stretch reads PRRRGGLRRRQ. Residues 298–313 are compositionally biased toward gly residues; it reads NGGGGGGTYGGGGGDP. The interaction with FBLN5 stretch occupies residues 319–386; sequence PPYGNMPPEA…YRPNQNGRGL (68 aa). Positions 387 to 591 are lysyl-oxidase like; that stretch reads PDLVPDPNYV…STTNCKIVQS (205 aa). Cystine bridges form between Cys412-Cys418, Cys465-Cys514, Cys498-Cys504, Cys525-Cys535, and Cys572-Cys586. Residues His466, His468, and His470 each contribute to the Cu cation site. Residues 494–529 constitute a cross-link (lysine tyrosylquinone (Lys-Tyr)); sequence KASFCLEDSTCDFGNLKRYACTSHTQGLSPGCYDTY. Tyr529 carries the 2',4',5'-topaquinone modification.

Belongs to the lysyl oxidase family. As to quaternary structure, interacts (via propeptide) with EFEMP2. Interacts with FBLN5. Cu cation is required as a cofactor. It depends on lysine tyrosylquinone residue as a cofactor. The lysine tyrosylquinone cross-link (LTQ) is generated by condensation of the epsilon-amino group of a lysine with a topaquinone produced by oxidation of tyrosine. Post-translationally, proteolytic processing by a furin-like protease causes removal of N-terminal propeptide resulting in an enzyme largely inactive, but further proteolytic processing by BMP1 results in enzyme activation.

It is found in the secreted. Its subcellular location is the extracellular space. It localises to the extracellular matrix. The enzyme catalyses L-lysyl-[protein] + O2 + H2O = (S)-2-amino-6-oxohexanoyl-[protein] + H2O2 + NH4(+). In terms of biological role, catalyzes the oxidative deamination of lysine and hydroxylysine residues in collagen and elastin, resulting in the formation of covalent cross-linkages, and the stabilization of collagen and elastin fibers. Essential for the elastic fiber homeostasis and for their maintenance at adult age. This is Lysyl oxidase homolog 1 (LOXL1) from Bos taurus (Bovine).